The sequence spans 431 residues: Glutamyl-tRNA(Gln) amidotransferase subunit A (431 aa).

Residues Lys-55 and Ser-130 each act as charge relay system in the active site. Ser-154 serves as the catalytic Acyl-ester intermediate.

Belongs to the amidase family. GatA subfamily. In terms of assembly, heterotrimer of A, B and C subunits.

It carries out the reaction L-glutamyl-tRNA(Gln) + L-glutamine + ATP + H2O = L-glutaminyl-tRNA(Gln) + L-glutamate + ADP + phosphate + H(+). Allows the formation of correctly charged Gln-tRNA(Gln) through the transamidation of misacylated Glu-tRNA(Gln) in organisms which lack glutaminyl-tRNA synthetase. The reaction takes place in the presence of glutamine and ATP through an activated gamma-phospho-Glu-tRNA(Gln). The sequence is that of Glutamyl-tRNA(Gln) amidotransferase subunit A from Methanococcus vannielii (strain ATCC 35089 / DSM 1224 / JCM 13029 / OCM 148 / SB).